The primary structure comprises 120 residues: MFLLYEYDIFWAFLLISSVIPILAFLLSGILAPIRKDPEKLSSYESGIEPIGDAWLQFRIRYYMFALVFVVFDVETVFLYPWAMSFDVLGVSVFIEALIFVLILIVGLVYAWRKGALEWS.

3 helical membrane-spanning segments follow: residues 9-29, 64-84, and 88-108; these read IFWAFLLISSVIPILAFLLSG, MFALVFVVFDVETVFLYPWAM, and VLGVSVFIEALIFVLILIVGL.

Belongs to the complex I subunit 3 family. As to quaternary structure, NDH is composed of at least 16 different subunits, 5 of which are encoded in the nucleus.

The protein localises to the plastid. It is found in the chloroplast thylakoid membrane. The enzyme catalyses a plastoquinone + NADH + (n+1) H(+)(in) = a plastoquinol + NAD(+) + n H(+)(out). The catalysed reaction is a plastoquinone + NADPH + (n+1) H(+)(in) = a plastoquinol + NADP(+) + n H(+)(out). Functionally, NDH shuttles electrons from NAD(P)H:plastoquinone, via FMN and iron-sulfur (Fe-S) centers, to quinones in the photosynthetic chain and possibly in a chloroplast respiratory chain. The immediate electron acceptor for the enzyme in this species is believed to be plastoquinone. Couples the redox reaction to proton translocation, and thus conserves the redox energy in a proton gradient. The polypeptide is NAD(P)H-quinone oxidoreductase subunit 3, chloroplastic (Fagopyrum esculentum subsp. ancestrale (Wild buckwheat)).